A 359-amino-acid chain; its full sequence is MPKPGIMDIHAYVGGKSKVEGIAHPVKLSSNENILGSSDKAKDAYRNAVDRLHIYPDGKANFLRAAVAERYKLEPERLTFGDGSDEIFALLCQVYLEPGDNIVQGEHGFAAYAIGARACQGEVRMAKEVNHRVDIDEVIKCVDERTRLVFIANPANPTGTWLTGEEIRALHAALPPSVVLVLDGAYAEFCSDPHFEDGLELARTAENVIVTRTFSKIHGLAALRVGWGYAPEHIIAPIERIRPPFNTSIPAQEAAVAALFDDDFQDRSRALVEQWRPWLAQQLGGLGLEVTPSAANFVLATFPTTPGKTAPEAEAFLASKGYLVRAVGNYNLPHAIRITIGLEEQNRAVVELLSQFMGR.

Residue lysine 216 is modified to N6-(pyridoxal phosphate)lysine.

It belongs to the class-II pyridoxal-phosphate-dependent aminotransferase family. Histidinol-phosphate aminotransferase subfamily. As to quaternary structure, homodimer. Requires pyridoxal 5'-phosphate as cofactor.

It catalyses the reaction L-histidinol phosphate + 2-oxoglutarate = 3-(imidazol-4-yl)-2-oxopropyl phosphate + L-glutamate. The protein operates within amino-acid biosynthesis; L-histidine biosynthesis; L-histidine from 5-phospho-alpha-D-ribose 1-diphosphate: step 7/9. The polypeptide is Histidinol-phosphate aminotransferase 1 (hisC1) (Caulobacter vibrioides (strain ATCC 19089 / CIP 103742 / CB 15) (Caulobacter crescentus)).